The chain runs to 290 residues: MDKIIKSIAQSGAFRAYVLDSTETVALAQEKHNTLSSSTVALGRTLIANQILAANQKGDSKITVKVIGDSSFGHIISVADTKGHVKGYIQNTGVDIKKTATGEVLVGPFMGNGHFVTIIDYGTGNPYTSTTPLITGEIGEDFAYYLTESEQTPSAIGLNVLLDENDKVKVAGGFMVQVLPGASEEEIARYEKRLQEMPAISYLLASKNHVDALLEAIYGDEPYKRLSEEPLSFQCDCSRERFEAALMTLPKADLQAMIDEDKGAEIVCQFCGTKYQFNESDLEAIINDKA.

Intrachain disulfides connect cysteine 235/cysteine 237 and cysteine 268/cysteine 271.

This sequence belongs to the HSP33 family. Under oxidizing conditions two disulfide bonds are formed involving the reactive cysteines. Under reducing conditions zinc is bound to the reactive cysteines and the protein is inactive.

Its subcellular location is the cytoplasm. In terms of biological role, redox regulated molecular chaperone. Protects both thermally unfolding and oxidatively damaged proteins from irreversible aggregation. Plays an important role in the bacterial defense system toward oxidative stress. The sequence is that of 33 kDa chaperonin from Streptococcus pyogenes serotype M2 (strain MGAS10270).